The primary structure comprises 638 residues: Outer dense fiber protein 2 (638 aa).

Residue Thr-73 is modified to Phosphothreonine. Residue Ser-76 is modified to Phosphoserine; by TSSK4. Phosphoserine is present on residues Ser-87 and Ser-90. Thr-91 bears the Phosphothreonine mark. 2 positions are modified to phosphoserine: Ser-96 and Ser-110. Lys-119 participates in a covalent cross-link: Glycyl lysine isopeptide (Lys-Gly) (interchain with G-Cter in SUMO2). The residue at position 120 (Ser-120) is a Phosphoserine. Residues Gln-125 to Asp-198 are a coiled coil. Thr-212 is modified (phosphothreonine). Coiled coils occupy residues Asp-226 to Leu-404 and Glu-442 to Arg-616. Ser-242 bears the Phosphoserine mark. Positions Lys-373–Lys-396 are disordered. At Ser-613 the chain carries Phosphoserine.

The protein belongs to the ODF2 family. In terms of assembly, self-associates. Associates with microtubules and forms a fibrillar structure partially linked to the microtubule network. Interacts via its C-terminus with PLK1. Interacts with ODF1. Localized at the distal/subdistal appendages of mother centrioles. Interacts with MARK4; the interaction is required for localization of ODF2 to centrioles. Interacts with TSSK4. Interacts with AKNA. Interacts with QRICH2. Interacts with CFAP58. Interacts with BBOF1. Interacts with CCDC38. Interacts with CCDC42. In terms of processing, tyrosine phosphorylated. Phosphorylated on Ser-76 by TSSK4.

The protein localises to the cytoplasm. Its subcellular location is the cytoskeleton. The protein resides in the microtubule organizing center. It is found in the centrosome. It localises to the cell projection. The protein localises to the cilium. Its subcellular location is the centriole. The protein resides in the spindle pole. It is found in the flagellum. Its function is as follows. Seems to be a major component of sperm tail outer dense fibers (ODF). ODFs are filamentous structures located on the outside of the axoneme in the midpiece and principal piece of the mammalian sperm tail and may help to maintain the passive elastic structures and elastic recoil of the sperm tail. May have a modulating influence on sperm motility. Functions as a general scaffold protein that is specifically localized at the distal/subdistal appendages of mother centrioles. Component of the centrosome matrix required for the localization of PLK1 and NIN to the centrosomes. Required for the formation and/or maintenance of normal CETN1 assembly. In Macaca fascicularis (Crab-eating macaque), this protein is Outer dense fiber protein 2 (ODF2).